The primary structure comprises 312 residues: D-alanine--D-alanine ligase (312 aa).

Positions K102–K307 constitute an ATP-grasp domain. I136–T191 is an ATP binding site. Residues D262, E274, and N276 each contribute to the Mg(2+) site.

This sequence belongs to the D-alanine--D-alanine ligase family. The cofactor is Mg(2+). Requires Mn(2+) as cofactor.

Its subcellular location is the cytoplasm. It carries out the reaction 2 D-alanine + ATP = D-alanyl-D-alanine + ADP + phosphate + H(+). The protein operates within cell wall biogenesis; peptidoglycan biosynthesis. In terms of biological role, cell wall formation. In Desulforamulus reducens (strain ATCC BAA-1160 / DSM 100696 / MI-1) (Desulfotomaculum reducens), this protein is D-alanine--D-alanine ligase.